The following is a 1197-amino-acid chain: ATP-dependent helicase/nuclease subunit A (1197 aa).

Residues 2 to 458 (RQWTKEQQAA…IDLAKNFRSR (457 aa)) enclose the UvrD-like helicase ATP-binding domain. 23–30 (AAAGSGKT) provides a ligand contact to ATP. One can recognise a UvrD-like helicase C-terminal domain in the interval 485-774 (RAALYQGTEF…RIMSIHKSKG (290 aa)).

The protein belongs to the helicase family. AddA subfamily. Heterodimer of AddA and AddB/RexB. Mg(2+) serves as cofactor.

It catalyses the reaction Couples ATP hydrolysis with the unwinding of duplex DNA by translocating in the 3'-5' direction.. The catalysed reaction is ATP + H2O = ADP + phosphate + H(+). Functionally, the heterodimer acts as both an ATP-dependent DNA helicase and an ATP-dependent, dual-direction single-stranded exonuclease. Recognizes the chi site generating a DNA molecule suitable for the initiation of homologous recombination. The AddA nuclease domain is required for chi fragment generation; this subunit has the helicase and 3' -&gt; 5' nuclease activities. This is ATP-dependent helicase/nuclease subunit A from Alkaliphilus oremlandii (strain OhILAs) (Clostridium oremlandii (strain OhILAs)).